Consider the following 264-residue polypeptide: Taurine import ATP-binding protein TauB (264 aa).

The 230-residue stretch at 4 to 233 folds into the ABC transporter domain; it reads LQLERISAQY…RYAAGESARA (230 aa). 38–45 serves as a coordination point for ATP; sequence GPSGSGKT.

It belongs to the ABC transporter superfamily. Taurine importer (TC 3.A.1.17.1) family. In terms of assembly, the complex is composed of two ATP-binding proteins (TauB), two transmembrane proteins (TauC) and a solute-binding protein (TauA).

It is found in the cell inner membrane. It carries out the reaction taurine(out) + ATP + H2O = taurine(in) + ADP + phosphate + H(+). Part of the ABC transporter complex TauABC involved in taurine import. Responsible for energy coupling to the transport system. The polypeptide is Taurine import ATP-binding protein TauB (Pseudomonas fluorescens (strain ATCC BAA-477 / NRRL B-23932 / Pf-5)).